Consider the following 416-residue polypeptide: Calreticulin (416 aa).

An N-linked (GlcNAc...) asparagine glycan is attached at Asn54. An intrachain disulfide couples Cys108 to Cys140. Positions 112, 114, 131, and 138 each coordinate an alpha-D-glucoside. Tandem repeats lie at residues 194–205, 213–224, 230–241, 248–259, 263–273, 277–287, and 291–301. The interval 194–259 is 4 X approximate repeats; that stretch reads KQSGSVYTDW…EAKKPEDWDD (66 aa). Residues 209–281 are disordered; that stretch reads KQIKDPEAKK…NPDYKGEWKP (73 aa). Residues 210–255 show a composition bias toward basic and acidic residues; that stretch reads QIKDPEAKKPEDWEDKEYIPDPEDKKPEGYDDIPKEITDPEAKKPE. Positions 263–301 are 3 X approximate repeats; that stretch reads GEWTAPTIPNPDYKGEWKPKKIKNPNFKGKWKAPMIDNP. Glu321 serves as a coordination point for an alpha-D-glucoside. Positions 349–378 are enriched in basic and acidic residues; the sequence is ETWGKNKDAEKAAFDEAEKKKEEEEAKDDP. A disordered region spans residues 349–416; it reads ETWGKNKDAE…EDDEDVHDEL (68 aa). The segment covering 379 to 416 has biased composition (acidic residues); sequence TESDDEKPDEEGESDGEGDDESKDIDNEEDDEDVHDEL. The short motif at 413 to 416 is the Prevents secretion from ER element; the sequence is HDEL.

It belongs to the calreticulin family.

The protein localises to the endoplasmic reticulum lumen. Functionally, molecular calcium-binding chaperone promoting folding, oligomeric assembly and quality control in the ER via the calreticulin/calnexin cycle. This lectin may interact transiently with almost all of the monoglucosylated glycoproteins that are synthesized in the ER. This is Calreticulin from Berberis stolonifera (Barberry).